Consider the following 70-residue polypeptide: Large ribosomal subunit protein bL31 (70 aa).

Zn(2+)-binding residues include Cys-16, Cys-18, Cys-37, and Cys-40. A disordered region spans residues 48 to 70 (QRQASSGGRVDKFNKRFGALGSK).

The protein belongs to the bacterial ribosomal protein bL31 family. Type A subfamily. Part of the 50S ribosomal subunit. Zn(2+) serves as cofactor.

Binds the 23S rRNA. This is Large ribosomal subunit protein bL31 from Photobacterium profundum (strain SS9).